Here is a 548-residue protein sequence, read N- to C-terminus: Chaperonin GroEL (548 aa).

Residues 30 to 33 (TLGP), lysine 51, 87 to 91 (DGTTT), glycine 415, 479 to 481 (NAA), and aspartate 495 contribute to the ATP site.

This sequence belongs to the chaperonin (HSP60) family. Forms a cylinder of 14 subunits composed of two heptameric rings stacked back-to-back. Interacts with the co-chaperonin GroES.

The protein localises to the cytoplasm. It catalyses the reaction ATP + H2O + a folded polypeptide = ADP + phosphate + an unfolded polypeptide.. Together with its co-chaperonin GroES, plays an essential role in assisting protein folding. The GroEL-GroES system forms a nano-cage that allows encapsulation of the non-native substrate proteins and provides a physical environment optimized to promote and accelerate protein folding. The sequence is that of Chaperonin GroEL from Lawsonia intracellularis (strain PHE/MN1-00).